A 356-amino-acid chain; its full sequence is Protein RecA (356 aa).

67 to 74 (GPESSGKT) is an ATP binding site.

The protein belongs to the RecA family.

Its subcellular location is the cytoplasm. In terms of biological role, can catalyze the hydrolysis of ATP in the presence of single-stranded DNA, the ATP-dependent uptake of single-stranded DNA by duplex DNA, and the ATP-dependent hybridization of homologous single-stranded DNAs. It interacts with LexA causing its activation and leading to its autocatalytic cleavage. The protein is Protein RecA of Yersinia pestis (strain Pestoides F).